The chain runs to 194 residues: Cysteine and glycine-rich protein 3 (194 aa).

The segment at 1 to 5 is interaction with TCAP; it reads MPNWG. The 52-residue stretch at 10 to 61 folds into the LIM zinc-binding 1 domain; that stretch reads CGACEKTVYHAEEIQCNGRSFHKTCFHCMACRKALDSTTVAAHESEIYCKVC. Positions 64 to 69 match the Nuclear localization signal motif; that stretch reads RRYGPK. The segment at 94–105 is interaction with CLF2; sequence QSPKPARAATTS. Ser95, Ser111, and Ser153 each carry phosphoserine. The region spanning 120–171 is the LIM zinc-binding 2 domain; the sequence is CPRCGKSVYAAEKVMGGGKPWHKTCFRCAICGKSLESTNVTDKDGELYCKVC.

In terms of assembly, self-associates. Oligomeric in the cytoplasm and monomeric in the nucleus. Homooligomers preferentially form along the actin cytoskeleton. Interacts with TCAP. Interacts with LDHD, MYOD1, MYOG, ACTN2, NRAP, MYF6. Interacts (via N-terminus)D with GLRX3 (via C-terminus) and PPP3CA; GLRX3 and calcineurin compete for interaction with CSRP3. Interacts with CFL2; the stoichiometry influences F-actin depolymerization and possibly two molecules of CFL2 can interact with one molecule of CSRP3 resulting in the highest functional impact; the interaction is stronger with phosphorylated CFL2. Phosphorylated by PKC/PRKCA.

It localises to the nucleus. It is found in the cytoplasm. Its subcellular location is the cytoskeleton. The protein resides in the myofibril. The protein localises to the sarcomere. It localises to the z line. Functionally, positive regulator of myogenesis. Acts as a cofactor for myogenic bHLH transcription factors such as MYOD1, and probably MYOG and MYF6. Enhances the DNA-binding activity of the MYOD1:TCF3 isoform E47 complex and may promote formation of a functional MYOD1:TCF3 isoform E47:MEF2A complex involved in myogenesis. Plays a crucial and specific role in the organization of cytosolic structures in cardiomyocytes. Could play a role in mechanical stretch sensing. May be a scaffold protein that promotes the assembly of interacting proteins at Z-line structures. It is essential for calcineurin anchorage to the Z line. Required for stress-induced calcineurin-NFAT activation. The role in regulation of cytoskeleton dynamics by association with CFL2 is reported conflictingly. Proposed to contribute to the maintenance of muscle cell integrity through an actin-based mechanism. Can directly bind to actin filaments, cross-link actin filaments into bundles without polarity selectivity and protect them from dilution- and cofilin-mediated depolymerization; the function seems to involve its self-association. In vitro can inhibit PKC/PRKCA activity. Proposed to be involved in cardiac stress signaling by down-regulating excessive PKC/PRKCA signaling. The sequence is that of Cysteine and glycine-rich protein 3 (Csrp3) from Mus musculus (Mouse).